The following is a 124-amino-acid chain: Fluoride-specific ion channel FluC 2 (124 aa).

Transmembrane regions (helical) follow at residues 9–29 (LGIF…STWL), 34–54 (DFPW…IYLV), 67–87 (LILA…SLML), and 99–119 (LSLI…AYYL). Gly-77 and Thr-80 together coordinate Na(+).

It belongs to the fluoride channel Fluc/FEX (TC 1.A.43) family.

The protein localises to the cell membrane. It carries out the reaction fluoride(in) = fluoride(out). Na(+) is not transported, but it plays an essential structural role and its presence is essential for fluoride channel function. Fluoride-specific ion channel. Important for reducing fluoride concentration in the cell, thus reducing its toxicity. This chain is Fluoride-specific ion channel FluC 2, found in Streptococcus pneumoniae serotype 4 (strain ATCC BAA-334 / TIGR4).